A 478-amino-acid chain; its full sequence is Proline--tRNA ligase (478 aa).

Belongs to the class-II aminoacyl-tRNA synthetase family. ProS type 3 subfamily. Homodimer.

The protein resides in the cytoplasm. It carries out the reaction tRNA(Pro) + L-proline + ATP = L-prolyl-tRNA(Pro) + AMP + diphosphate. Its function is as follows. Catalyzes the attachment of proline to tRNA(Pro) in a two-step reaction: proline is first activated by ATP to form Pro-AMP and then transferred to the acceptor end of tRNA(Pro). The protein is Proline--tRNA ligase of Clostridium novyi (strain NT).